The chain runs to 139 residues: Actin-depolymerizing factor 6 (139 aa).

The ADF-H domain maps to 5 to 139; that stretch reads ASGMAVGDEC…SMDIVKARAL (135 aa).

This sequence belongs to the actin-binding proteins ADF family.

Its function is as follows. Actin-depolymerizing protein. Severs actin filaments (F-actin) and binds to actin monomers. The polypeptide is Actin-depolymerizing factor 6 (ADF6) (Oryza sativa subsp. japonica (Rice)).